Reading from the N-terminus, the 84-residue chain is Large ribosomal subunit protein bL27 (84 aa).

Positions 1 to 25 (MAHKKGAGSTKNGRDSKPKMLGVKR) are disordered.

Belongs to the bacterial ribosomal protein bL27 family.

This Dehalococcoides mccartyi (strain ATCC BAA-2266 / KCTC 15142 / 195) (Dehalococcoides ethenogenes (strain 195)) protein is Large ribosomal subunit protein bL27.